Consider the following 245-residue polypeptide: MAKIVILFDFDRTLIDGDSDNWVVTEMGLTEIFHQLRFTLPWNRLMDRMMMELQSQGRSIDDIKSCLKKMPIDSHIIEAIKSAKSSGCDLKIVSDANQFFIEKILEHHDLVDCFSEIYTNPTSLDDNGNLRILPYHSDALPPHSCNLCPSNLCKGLVMDHLRASSSNDQIPRRFIYLGDGGGDFCPTLKLRECDFVMPRTNYPLWKKISDNPLLIKAEVKEWSSAEEQQRILLQLVSTITKEEDS.

D9 (nucleophile) is an active-site residue. Mg(2+) contacts are provided by D9, D11, and D179. D11 functions as the Proton donor in the catalytic mechanism.

The protein belongs to the HAD-like hydrolase superfamily. As to quaternary structure, monomer. Mg(2+) is required as a cofactor.

The catalysed reaction is thiamine phosphate + H2O = thiamine + phosphate. Functionally, HAD-like hydrolase that has a thiamine monophosphate phosphatase activity in a heterologous system. Does not contribute to thiamine monophosphate phosphatase activity in planta. The sequence is that of Thiamine phosphate phosphatase-like protein from Arabidopsis thaliana (Mouse-ear cress).